A 101-amino-acid polypeptide reads, in one-letter code: MAKVAVINRDLKRRKIVKKFEARRAELLATINDASVSDEDRHSARIKLQMLPRNASPVRLRNRCSLTGRPRGVYSKFGLGRGKLRDIAMSGEIPGMIKASW.

The protein belongs to the universal ribosomal protein uS14 family. Part of the 30S ribosomal subunit. Contacts proteins S3 and S10.

Binds 16S rRNA, required for the assembly of 30S particles and may also be responsible for determining the conformation of the 16S rRNA at the A site. The chain is Small ribosomal subunit protein uS14 from Nitrosospira multiformis (strain ATCC 25196 / NCIMB 11849 / C 71).